The chain runs to 55 residues: Small integral membrane protein 27 (55 aa).

Residues 11–31 (WIYSVLLLAIVLISWGCIIYA) form a helical membrane-spanning segment.

The protein localises to the membrane. The protein is Small integral membrane protein 27 of Homo sapiens (Human).